Consider the following 132-residue polypeptide: Large ribosomal subunit protein bL19 (132 aa).

Belongs to the bacterial ribosomal protein bL19 family.

This protein is located at the 30S-50S ribosomal subunit interface and may play a role in the structure and function of the aminoacyl-tRNA binding site. This Maricaulis maris (strain MCS10) (Caulobacter maris) protein is Large ribosomal subunit protein bL19.